The primary structure comprises 123 residues: Small ribosomal subunit protein uS12 (123 aa).

Asp-89 is modified (3-methylthioaspartic acid).

Belongs to the universal ribosomal protein uS12 family. Part of the 30S ribosomal subunit. Contacts proteins S8 and S17. May interact with IF1 in the 30S initiation complex.

In terms of biological role, with S4 and S5 plays an important role in translational accuracy. Its function is as follows. Interacts with and stabilizes bases of the 16S rRNA that are involved in tRNA selection in the A site and with the mRNA backbone. Located at the interface of the 30S and 50S subunits, it traverses the body of the 30S subunit contacting proteins on the other side and probably holding the rRNA structure together. The combined cluster of proteins S8, S12 and S17 appears to hold together the shoulder and platform of the 30S subunit. This Beijerinckia indica subsp. indica (strain ATCC 9039 / DSM 1715 / NCIMB 8712) protein is Small ribosomal subunit protein uS12.